A 414-amino-acid chain; its full sequence is Peptidoglycan beta-N-acetylmuramidase NamZ (414 aa).

The signal sequence occupies residues 1–23 (MRKTIFAFLTGLMMFGTITAASA).

It belongs to the glycoside hydrolase 171 family. In terms of assembly, homodimer in solution.

It is found in the secreted. The enzyme catalyses Hydrolysis of terminal, non-reducing N-acetylmuramic residues.. Functionally, catalyzes the exo-lytic cleavage of beta-1,4-N-acetylmuramate (beta-1,4-MurNAc) from the non-reducing ends of peptidoglycan chains. Specifically hydrolyzes the natural, peptidoglycan-derived disaccharide MurNAc-GlcNAc and the artificial substrate para-nitrophenyl beta-N-acetylmuramic acid (pNP-MurNAc). Requires a MurNAc entity at the non-reducing end, and cannot cleave GlcNAc-MurNAc. Probably plays a role in cell wall turnover and recycling. In Bacillus subtilis (strain 168), this protein is Peptidoglycan beta-N-acetylmuramidase NamZ.